The following is a 95-amino-acid chain: Small ribosomal subunit protein uS19 (95 aa).

The protein belongs to the universal ribosomal protein uS19 family.

In terms of biological role, protein S19 forms a complex with S13 that binds strongly to the 16S ribosomal RNA. The sequence is that of Small ribosomal subunit protein uS19 from Thermodesulfovibrio yellowstonii (strain ATCC 51303 / DSM 11347 / YP87).